A 543-amino-acid chain; its full sequence is CTP synthase (543 aa).

An amidoligase domain region spans residues 1 to 265; that stretch reads MTNYIFVTGG…DQLVVDRFGL (265 aa). Ser13 serves as a coordination point for CTP. Ser13 contacts UTP. ATP is bound by residues 14–19 and Asp71; that span reads SLGKGI. Positions 71 and 139 each coordinate Mg(2+). CTP-binding positions include 146–148, 186–191, and Lys222; these read DIE and KTKPTQ. UTP is bound by residues 186-191 and Lys222; that span reads KTKPTQ. Residue 238-240 coordinates ATP; the sequence is KDV. The Glutamine amidotransferase type-1 domain occupies 290–541; it reads NIGMIGKYVE…VAAAGKYQKE (252 aa). Gly351 provides a ligand contact to L-glutamine. Cys378 (nucleophile; for glutamine hydrolysis) is an active-site residue. L-glutamine is bound by residues 379-382, Glu402, and Arg469; that span reads LGMQ. Residues His514 and Glu516 contribute to the active site.

It belongs to the CTP synthase family. As to quaternary structure, homotetramer.

It catalyses the reaction UTP + L-glutamine + ATP + H2O = CTP + L-glutamate + ADP + phosphate + 2 H(+). The enzyme catalyses L-glutamine + H2O = L-glutamate + NH4(+). The catalysed reaction is UTP + NH4(+) + ATP = CTP + ADP + phosphate + 2 H(+). It participates in pyrimidine metabolism; CTP biosynthesis via de novo pathway; CTP from UDP: step 2/2. Its activity is regulated as follows. Allosterically activated by GTP, when glutamine is the substrate; GTP has no effect on the reaction when ammonia is the substrate. The allosteric effector GTP functions by stabilizing the protein conformation that binds the tetrahedral intermediate(s) formed during glutamine hydrolysis. Inhibited by the product CTP, via allosteric rather than competitive inhibition. Its function is as follows. Catalyzes the ATP-dependent amination of UTP to CTP with either L-glutamine or ammonia as the source of nitrogen. Regulates intracellular CTP levels through interactions with the four ribonucleotide triphosphates. The chain is CTP synthase from Alteromonas mediterranea (strain DSM 17117 / CIP 110805 / LMG 28347 / Deep ecotype).